Here is a 380-residue protein sequence, read N- to C-terminus: cAMP-dependent protein kinase type I-alpha regulatory subunit (380 aa).

Met-1 is subject to N-acetylmethionine. Residue Ala-2 is modified to N-acetylalanine; in cAMP-dependent protein kinase type I-alpha regulatory subunit, N-terminally processed. The segment at 2-135 (ASGSTASEEE…ALAKAIEKNV (134 aa)) is dimerization and phosphorylation. Ser-3, Ser-76, and Ser-82 each carry phosphoserine. The segment at 64–96 (IQNLQKASARADSREDEISPPPPNPVVKGRRRR) is disordered. Residues 95–99 (RRGAI) carry the Pseudophosphorylation motif motif. Ser-100 carries the phosphoserine modification. Residues 136 to 253 (LFSH…SKVS), Glu-201, Arg-210, 254 to 380 (ILES…SLSV), Glu-325, and Arg-334 each bind 3',5'-cyclic AMP. Ser-257 bears the Phosphoserine mark.

The protein belongs to the cAMP-dependent kinase regulatory chain family. In terms of assembly, the inactive holoenzyme is composed of two regulatory chains and two catalytic chains. Activation by cAMP releases the two active catalytic monomers and the regulatory dimer. Interacts with PRKACA and PRKACB. PRKAR1A also interacts with RFC2; the complex may be involved in cell survival. Interacts with AKAP4. Interacts with RARA; the interaction occurs in the presence of cAMP or FSH and regulates RARA transcriptional activity. Interacts with the phosphorylated form of PJA2. Interacts with CBFA2T3. Interacts with PRKX; regulates this cAMP-dependent protein kinase. Interacts with smAKAP; this interaction may target PRKAR1A to the plasma membrane. Interacts with AICDA. Post-translationally, the pseudophosphorylation site binds to the substrate-binding region of the catalytic chain, resulting in the inhibition of its activity. As to expression, four types of regulatory chains are found: I-alpha, I-beta, II-alpha, and II-beta. Their expression varies among tissues and is in some cases constitutive and in others inducible.

The protein localises to the cell membrane. Its function is as follows. Regulatory subunit of the cAMP-dependent protein kinases involved in cAMP signaling in cells. In Sus scrofa (Pig), this protein is cAMP-dependent protein kinase type I-alpha regulatory subunit (PRKAR1A).